The following is a 193-amino-acid chain: uncharacterized protein (193 aa).

Residues 119 to 143 (LAGSLLAATGMTLGIFGMGITGTCW) traverse the membrane as a helical segment.

Its subcellular location is the mitochondrion membrane. This is an uncharacterized protein from Saccharomyces cerevisiae (strain ATCC 204508 / S288c) (Baker's yeast).